Reading from the N-terminus, the 195-residue chain is Large ribosomal subunit protein uL18 (195 aa).

It belongs to the universal ribosomal protein uL18 family. As to quaternary structure, part of the 50S ribosomal subunit. Contacts the 5S and 23S rRNAs.

In terms of biological role, this is one of the proteins that bind and probably mediate the attachment of the 5S RNA into the large ribosomal subunit, where it forms part of the central protuberance. The chain is Large ribosomal subunit protein uL18 from Methanococcus vannielii.